An 809-amino-acid polypeptide reads, in one-letter code: LPS-assembly protein LptD (809 aa).

The signal sequence occupies residues 1-22 (MRRALRLLPLPLSIAICLPAMA).

Belongs to the LptD family. Component of the lipopolysaccharide transport and assembly complex. Interacts with LptE and LptA.

The protein localises to the cell outer membrane. Together with LptE, is involved in the assembly of lipopolysaccharide (LPS) at the surface of the outer membrane. This is LPS-assembly protein LptD from Xanthomonas campestris pv. campestris (strain 8004).